The following is a 245-amino-acid chain: 8-amino-3,8-dideoxy-manno-octulosonate cytidylyltransferase (245 aa).

Belongs to the KdsB family.

It localises to the cytoplasm. It catalyses the reaction 8-amino-3,8-dideoxy-alpha-D-manno-octulosonate + CTP = CMP-8-amino-3,8-dideoxy-alpha-D-manno-oct-2-ulosonate + diphosphate. It functions in the pathway bacterial outer membrane biogenesis; lipopolysaccharide biosynthesis. Functionally, activates KDO8N (a required 8-carbon sugar) for incorporation into bacterial lipopolysaccharide in the Shewanella genus. The sequence is that of 8-amino-3,8-dideoxy-manno-octulosonate cytidylyltransferase from Shewanella frigidimarina (strain NCIMB 400).